The sequence spans 489 residues: Protein DETOXIFICATION 26 (489 aa).

12 consecutive transmembrane segments (helical) span residues 42 to 62 (IWYI…ILII), 75 to 95 (LAAI…LLLG), 125 to 145 (IILF…TPIL), 157 to 177 (LTGT…FFFP), 190 to 210 (VIAI…WFFV), 217 to 237 (IIGT…ILFL), 271 to 291 (IMLC…GNLV), 300 to 320 (LSIC…FFAG), 342 to 362 (IVSI…IVIF), 385 to 405 (VLLA…GVAV), 416 to 436 (INLG…GWIF), and 442 to 462 (GIWA…LIII).

It belongs to the multi antimicrobial extrusion (MATE) (TC 2.A.66.1) family.

It is found in the membrane. The polypeptide is Protein DETOXIFICATION 26 (Arabidopsis thaliana (Mouse-ear cress)).